The following is a 178-amino-acid chain: Caveolin-1 (178 aa).

Ser2 bears the N-acetylserine mark. Position 2 is a phosphoserine (Ser2). Positions 2–94 (SGGKYVDAEG…WKASFTTFTV (93 aa)) are required for homooligomerization. Residues 2–104 (SGGKYVDAEG…TKYWFYRLLS (103 aa)) are Cytoplasmic-facing. An N6-acetyllysine; alternate modification is found at Lys5. Lys5 is covalently cross-linked (Glycyl lysine isopeptide (Lys-Gly) (interchain with G-Cter in ubiquitin); alternate). At Tyr6 the chain carries Phosphotyrosine. Position 14 is a phosphotyrosine; by ABL1 (Tyr14). Residue Tyr25 is modified to Phosphotyrosine. Glycyl lysine isopeptide (Lys-Gly) (interchain with G-Cter in ubiquitin) cross-links involve residues Lys26, Lys30, Lys39, Lys47, and Lys57. The interaction with CAVIN3 stretch occupies residues 82 to 94 (DGIWKASFTTFTV). Residues 105-125 (ALLGIPLALLWGIYFAILSFL) constitute an intramembrane region (helical). At 126 to 178 (HIWAVVPCIRSYLIEIQCISRVYSICIHTFCDPLFEAIGKVFSNIRATVQKEI) the chain is on the cytoplasmic side. Positions 131-142 (VPCIRSYLIEIQ) are interacts with SPRY1, SPRY2, SPRY3 and SPRY4. 3 S-palmitoyl cysteine lipidation sites follow: Cys133, Cys143, and Cys156. Residues 149-160 (SICIHTFCDPLF) are interacts with SPRY1, SPRY2, and SPRY4. Residues 167–178 (FSNIRATVQKEI) form an interacts with SPRY1, SPRY2, SPRY3 and SPRY4 region.

It belongs to the caveolin family. Homooligomer. Interacts with GLIPR2. Interacts with NOSTRIN. Interacts with SNAP25 and STX1A. Interacts (via the N-terminus) with DPP4; the interaction is direct. Interacts with CTNNB1, CDH1 and JUP. Interacts with PACSIN2; this interaction induces membrane tubulation. Interacts with SLC7A9. Interacts with BMX and BTK. Interacts with TGFBR1. Interacts with CAVIN3 (via leucine-zipper domain) in a cholesterol-sensitive manner. Interacts with CAVIN1. Interacts with EHD2 in a cholesterol-dependent manner. Forms a ternary complex with UBXN6 and VCP; mediates CAV1 targeting to lysosomes for degradation. Interacts with ABCG1; this interaction regulates ABCG1-mediated cholesterol efflux. Interacts with NEU3; this interaction enhances NEU3 sialidase activity within caveola. Interacts (via C-terminus) with SPRY1, SPRY2 (via C-terminus), SPRY3, and SPRY4. Interacts with IGFBP5; this interaction allows trafficking of IGFBP5 from the plasma membrane to the nucleus. In terms of processing, phosphorylated at Tyr-14 by ABL1 in response to oxidative stress. Post-translationally, ubiquitinated. Undergo monoubiquitination and multi- and/or polyubiquitination. Monoubiquitination of N-terminal lysines promotes integration in a ternary complex with UBXN6 and VCP which promotes oligomeric CAV1 targeting to lysosomes for degradation. Ubiquitinated by ZNRF1; leading to degradation and modulation of the TLR4-mediated immune response.

It localises to the golgi apparatus membrane. The protein localises to the cell membrane. Its subcellular location is the membrane. It is found in the caveola. The protein resides in the membrane raft. Its function is as follows. May act as a scaffolding protein within caveolar membranes. Forms a stable heterooligomeric complex with CAV2 that targets to lipid rafts and drives caveolae formation. Mediates the recruitment of CAVIN proteins (CAVIN1/2/3/4) to the caveolae. Interacts directly with G-protein alpha subunits and can functionally regulate their activity. Involved in the costimulatory signal essential for T-cell receptor (TCR)-mediated T-cell activation. Its binding to DPP4 induces T-cell proliferation and NF-kappa-B activation in a T-cell receptor/CD3-dependent manner. Recruits CTNNB1 to caveolar membranes and may regulate CTNNB1-mediated signaling through the Wnt pathway. Negatively regulates TGFB1-mediated activation of SMAD2/3 by mediating the internalization of TGFBR1 from membrane rafts leading to its subsequent degradation. Binds 20(S)-hydroxycholesterol (20(S)-OHC). The chain is Caveolin-1 (CAV1) from Ornithorhynchus anatinus (Duckbill platypus).